The chain runs to 228 residues: Orotate phosphoribosyltransferase (228 aa).

Residues arginine 107, lysine 108, lysine 111, and 133 to 141 (EDLTTDGGS) each bind 5-phospho-alpha-D-ribose 1-diphosphate. Residue threonine 137 participates in orotate binding.

Belongs to the purine/pyrimidine phosphoribosyltransferase family. PyrE subfamily. Homodimer. It depends on Mg(2+) as a cofactor.

It carries out the reaction orotidine 5'-phosphate + diphosphate = orotate + 5-phospho-alpha-D-ribose 1-diphosphate. It functions in the pathway pyrimidine metabolism; UMP biosynthesis via de novo pathway; UMP from orotate: step 1/2. Functionally, catalyzes the transfer of a ribosyl phosphate group from 5-phosphoribose 1-diphosphate to orotate, leading to the formation of orotidine monophosphate (OMP). This is Orotate phosphoribosyltransferase from Jannaschia sp. (strain CCS1).